The sequence spans 384 residues: Eukaryotic translation initiation factor 3 subunit M (384 aa).

The PCI domain occupies 184–346 (ENRKAIEAMI…KKILITGAFP (163 aa)).

It belongs to the eIF-3 subunit M family. As to quaternary structure, component of the eukaryotic translation initiation factor 3 (eIF-3) complex.

It is found in the cytoplasm. Component of the eukaryotic translation initiation factor 3 (eIF-3) complex, which is involved in protein synthesis of a specialized repertoire of mRNAs and, together with other initiation factors, stimulates binding of mRNA and methionyl-tRNAi to the 40S ribosome. The eIF-3 complex specifically targets and initiates translation of a subset of mRNAs involved in cell proliferation. In Schistosoma japonicum (Blood fluke), this protein is Eukaryotic translation initiation factor 3 subunit M.